We begin with the raw amino-acid sequence, 296 residues long: Small ribosomal subunit protein uS2 (296 aa).

Residues 246–272 (QAKDGSVVDSGKGKSIAAHKGGGKASK) form a disordered region.

Belongs to the universal ribosomal protein uS2 family.

The polypeptide is Small ribosomal subunit protein uS2 (Anaplasma phagocytophilum (strain HZ)).